The following is a 136-amino-acid chain: ATP synthase epsilon chain, chloroplastic (136 aa).

It belongs to the ATPase epsilon chain family. In terms of assembly, F-type ATPases have 2 components, CF(1) - the catalytic core - and CF(0) - the membrane proton channel. CF(1) has five subunits: alpha(3), beta(3), gamma(1), delta(1), epsilon(1). CF(0) has three main subunits: a, b and c.

The protein localises to the plastid. The protein resides in the chloroplast thylakoid membrane. In terms of biological role, produces ATP from ADP in the presence of a proton gradient across the membrane. This chain is ATP synthase epsilon chain, chloroplastic, found in Chaetosphaeridium globosum (Charophycean green alga).